The primary structure comprises 168 residues: Cytolysin secretion protein (168 aa).

This is Cytolysin secretion protein (vvhB) from Vibrio vulnificus (strain CMCP6).